The following is a 333-amino-acid chain: MKPFPTHPDAIPAELQDVMDRLGSVAIEVANRIARGGIDEDLAGLCGTNTDGDGQKALDVIADDAFRVALEGSAVRFYASEEQDTAVTLNEAGTLALAIDPLDGSSNIDTNLSVGTTFAIWPAAPRPNPSFLRLGSELIAAGYVIYGPQVCMMVSFGKGTQKYVLDPGSRSFVLVDRAVKVPPSSTEFAINASNYRHWPKPIRAYIDDCVAGTEGPRGRNFNMRWLASLVAETHRILARGGVFLYPRDSRKGYEQGRLRYLYECAPIAFVITQAGGGATDGENPILGQTPSRLHARTPFVFGSAEKVARITAYHDLPEQETSALFGNRGLFRS.

Residues Glu81, Asp100, Leu102, and Asp103 each coordinate Mg(2+). Substrate contacts are provided by residues 103-106 and Asn191; that span reads DGSS. Position 263 (Glu263) interacts with Mg(2+).

The protein belongs to the FBPase class 1 family. In terms of assembly, homotetramer. Mg(2+) serves as cofactor.

The protein localises to the cytoplasm. It catalyses the reaction beta-D-fructose 1,6-bisphosphate + H2O = beta-D-fructose 6-phosphate + phosphate. Its pathway is carbohydrate biosynthesis; gluconeogenesis. Its activity is regulated as follows. Fructose-1,6-bisphosphatase II is not light-activated. The chain is Fructose-1,6-bisphosphatase class 1 1 from Cereibacter sphaeroides (Rhodobacter sphaeroides).